The following is a 433-amino-acid chain: Succinate--CoA ligase [GDP-forming] subunit beta, mitochondrial (433 aa).

The transit peptide at 1–38 (IPAAPVAAQARKLLRDLAFRPPLLAARSQVVQLTPRRW) directs the protein to the mitochondrion. Residues 47 to 275 (KKLMSDNGVK…NAEFRQKDIF (229 aa)) enclose the ATP-grasp domain. Gln58 is a GTP binding site. Lys74 bears the N6-acetyllysine mark. Lys79 carries the N6-succinyllysine modification. 91–93 (GRG) is a GTP binding site. An N6-acetyllysine mark is found at Lys133 and Lys140. Leu147 lines the GTP pocket. Ser162 is modified (phosphoserine). An N6-acetyllysine mark is found at Lys201 and Lys228. Mg(2+) contacts are provided by Asn244 and Asp258. Lys272 and Lys292 each carry N6-acetyllysine. A substrate-binding site is contributed by Asn309. Lys339 is modified (N6-succinyllysine). Lys348 is subject to N6-acetyllysine. A substrate-binding site is contributed by 366-368 (GIV). Residues Lys387 and Lys424 each carry the N6-acetyllysine modification.

This sequence belongs to the succinate/malate CoA ligase beta subunit family. GTP-specific subunit beta subfamily. Heterodimer of an alpha and a beta subunit. The beta subunit determines specificity for GTP. Requires Mg(2+) as cofactor.

The protein resides in the mitochondrion. The enzyme catalyses GTP + succinate + CoA = succinyl-CoA + GDP + phosphate. It participates in carbohydrate metabolism; tricarboxylic acid cycle; succinate from succinyl-CoA (ligase route): step 1/1. In terms of biological role, GTP-specific succinyl-CoA synthetase functions in the citric acid cycle (TCA), coupling the hydrolysis of succinyl-CoA to the synthesis of GTP and thus represents the only step of substrate-level phosphorylation in the TCA. The beta subunit provides nucleotide specificity of the enzyme and binds the substrate succinate, while the binding sites for coenzyme A and phosphate are found in the alpha subunit. In Sus scrofa (Pig), this protein is Succinate--CoA ligase [GDP-forming] subunit beta, mitochondrial.